Reading from the N-terminus, the 312-residue chain is Tyrosine recombinase XerC (312 aa).

One can recognise a Core-binding (CB) domain in the interval 1–103 (MIASIYSFLD…SIKSFAHYCV (103 aa)). The Tyr recombinase domain occupies 124 to 306 (ELPSPMTYAQ…SVKLKKQTHQ (183 aa)). Catalysis depends on residues Arg164, Lys188, His258, Arg261, and His284. Tyr293 acts as the O-(3'-phospho-DNA)-tyrosine intermediate in catalysis.

The protein belongs to the 'phage' integrase family. XerC subfamily. As to quaternary structure, forms a cyclic heterotetrameric complex composed of two molecules of XerC and two molecules of XerD.

Its subcellular location is the cytoplasm. Site-specific tyrosine recombinase, which acts by catalyzing the cutting and rejoining of the recombining DNA molecules. The XerC-XerD complex is essential to convert dimers of the bacterial chromosome into monomers to permit their segregation at cell division. It also contributes to the segregational stability of plasmids. The sequence is that of Tyrosine recombinase XerC from Chlamydia pneumoniae (Chlamydophila pneumoniae).